The following is a 358-amino-acid chain: Fructose-bisphosphate aldolase 3, cytoplasmic (358 aa).

Position 39 (Arg-39) interacts with substrate. Glu-183 serves as the catalytic Proton acceptor. The Schiff-base intermediate with dihydroxyacetone-P role is filled by Lys-225. Substrate contacts are provided by residues 266–268 (SGG) and Arg-298.

Belongs to the class I fructose-bisphosphate aldolase family. In terms of assembly, homotetramer.

It localises to the cytoplasm. Its subcellular location is the cytosol. It carries out the reaction beta-D-fructose 1,6-bisphosphate = D-glyceraldehyde 3-phosphate + dihydroxyacetone phosphate. Its pathway is carbohydrate degradation; glycolysis; D-glyceraldehyde 3-phosphate and glycerone phosphate from D-glucose: step 4/4. In terms of biological role, fructose-bisphosphate aldolase that plays a key role in glycolysis and gluconeogenesis. The polypeptide is Fructose-bisphosphate aldolase 3, cytoplasmic (Oryza sativa subsp. japonica (Rice)).